A 797-amino-acid polypeptide reads, in one-letter code: Kinesin-like protein KIF18B (797 aa).

A Kinesin motor domain is found at 11-352 (TVAVVVRVRP…LKYANRAKEI (342 aa)). 110-117 (GATGAGKT) provides a ligand contact to ATP. The stretch at 367–402 (ISKYATICEQLKTEVADLQAKLRAYEDAARDAGKQI) forms a coiled coil. Disordered regions lie at residues 412 to 476 (EEAV…PNRL), 528 to 564 (AAVS…PSVP), 579 to 640 (LSSP…KEPQ), and 730 to 797 (KGSS…SGPR). Residues 594 to 608 (MSNTSRLETPHSLNT) show a composition bias toward polar residues. Residues 731 to 744 (GSSIPKPSSISKGS) show a composition bias toward low complexity.

Belongs to the TRAFAC class myosin-kinesin ATPase superfamily. Kinesin family.

It localises to the nucleus. The protein resides in the cytoplasm. The protein localises to the cytoskeleton. Functionally, may play an important role in microtubule plus-end depolymerizing activity in mitotic cells. The protein is Kinesin-like protein KIF18B (KIF18B) of Gallus gallus (Chicken).